Consider the following 370-residue polypeptide: tRNA 2-selenouridine synthase (370 aa).

Positions 12–136 constitute a Rhodanese domain; sequence FLDDVPMMDM…MRTFLLETTQ (125 aa). The S-selanylcysteine intermediate role is filled by Cys-95.

The protein belongs to the SelU family. Monomer.

It catalyses the reaction 5-methylaminomethyl-2-thiouridine(34) in tRNA + selenophosphate + (2E)-geranyl diphosphate + H2O + H(+) = 5-methylaminomethyl-2-selenouridine(34) in tRNA + (2E)-thiogeraniol + phosphate + diphosphate. The catalysed reaction is 5-methylaminomethyl-2-thiouridine(34) in tRNA + (2E)-geranyl diphosphate = 5-methylaminomethyl-S-(2E)-geranyl-thiouridine(34) in tRNA + diphosphate. It carries out the reaction 5-methylaminomethyl-S-(2E)-geranyl-thiouridine(34) in tRNA + selenophosphate + H(+) = 5-methylaminomethyl-2-(Se-phospho)selenouridine(34) in tRNA + (2E)-thiogeraniol. The enzyme catalyses 5-methylaminomethyl-2-(Se-phospho)selenouridine(34) in tRNA + H2O = 5-methylaminomethyl-2-selenouridine(34) in tRNA + phosphate. Its function is as follows. Involved in the post-transcriptional modification of the uridine at the wobble position (U34) of tRNA(Lys), tRNA(Glu) and tRNA(Gln). Catalyzes the conversion of 2-thiouridine (S2U-RNA) to 2-selenouridine (Se2U-RNA). Acts in a two-step process involving geranylation of 2-thiouridine (S2U) to S-geranyl-2-thiouridine (geS2U) and subsequent selenation of the latter derivative to 2-selenouridine (Se2U) in the tRNA chain. In Pseudomonas putida (strain ATCC 47054 / DSM 6125 / CFBP 8728 / NCIMB 11950 / KT2440), this protein is tRNA 2-selenouridine synthase.